We begin with the raw amino-acid sequence, 351 residues long: Flagellar P-ring protein (351 aa).

The signal sequence occupies residues 1-20 (MKKILFLFTASLLLHVTLQA).

This sequence belongs to the FlgI family. The basal body constitutes a major portion of the flagellar organelle and consists of four rings (L,P,S, and M) mounted on a central rod.

The protein localises to the periplasm. It localises to the bacterial flagellum basal body. In terms of biological role, assembles around the rod to form the L-ring and probably protects the motor/basal body from shearing forces during rotation. This Sulfurimonas denitrificans (strain ATCC 33889 / DSM 1251) (Thiomicrospira denitrificans (strain ATCC 33889 / DSM 1251)) protein is Flagellar P-ring protein.